A 543-amino-acid chain; its full sequence is Probable protein kinase UbiB (543 aa).

One can recognise a Protein kinase domain in the interval 123–501 (DFDSQALASA…QQRQGQSRYL (379 aa)). ATP-binding positions include 129–137 (LASASIAQV) and Lys152. The Proton acceptor role is filled by Asp287. A helical membrane pass occupies residues 517-539 (LADATEVSTGFIVAGALAWFIGW).

It belongs to the ABC1 family. UbiB subfamily.

It is found in the cell inner membrane. The protein operates within cofactor biosynthesis; ubiquinone biosynthesis [regulation]. Functionally, is probably a protein kinase regulator of UbiI activity which is involved in aerobic coenzyme Q (ubiquinone) biosynthesis. This chain is Probable protein kinase UbiB, found in Yersinia pseudotuberculosis serotype O:1b (strain IP 31758).